The chain runs to 162 residues: Probable chemoreceptor glutamine deamidase CheD (162 aa).

Belongs to the CheD family.

It carries out the reaction L-glutaminyl-[protein] + H2O = L-glutamyl-[protein] + NH4(+). In terms of biological role, probably deamidates glutamine residues to glutamate on methyl-accepting chemotaxis receptors (MCPs), playing an important role in chemotaxis. This is Probable chemoreceptor glutamine deamidase CheD from Syntrophotalea carbinolica (strain DSM 2380 / NBRC 103641 / GraBd1) (Pelobacter carbinolicus).